Reading from the N-terminus, the 436-residue chain is 5-hydroxytryptamine receptor 6 (436 aa).

The Extracellular segment spans residues 1 to 27 (MVPEPGPVNSSTPAWGPGPPPAPGGSG). A glycan (N-linked (GlcNAc...) asparagine) is linked at asparagine 9. Residues 28 to 52 (WVAAALCVVIVLTAAANSLLIVLIC) traverse the membrane as a helical segment. Over 53 to 62 (TQPALRNTSN) the chain is Cytoplasmic. Residues 63-88 (FFLVSLFTSDLMVGLVVMPPAMLNAL) traverse the membrane as a helical segment. Topologically, residues 89-96 (YGRWVLAR) are extracellular. Residues 97-122 (GLCLLWTAFDVMCCSASILNLCLISL) traverse the membrane as a helical segment. Cysteine 99 and cysteine 180 are disulfide-bonded. Serotonin is bound at residue aspartate 106. Topologically, residues 123 to 142 (DRYLLILSPLRYKLRMTAPR) are cytoplasmic. The helical transmembrane segment at 143-167 (ALALILGAWSLAALASFLPLLLGWH) threads the bilayer. Topologically, residues 168–185 (ELGKARTPAPGQCRLLAS) are extracellular. A helical membrane pass occupies residues 186 to 209 (LPFVLVASGVTFFLPSGAICFTYC). Residues 210–266 (RILLAARKQAVQVASLTTGTAGQALETLQVPRTPRPGMESADSRRLATKHSRKALKA) lie on the Cytoplasmic side of the membrane. The chain crosses the membrane as a helical span at residues 267–293 (SLTLGILLGMFFVTWLPFFVANIAQAV). Asparagine 288 contacts serotonin. Over 294-299 (CDCISP) the chain is Extracellular. Residues 300-323 (GLFDVLTWLGYCNSTMNPIIYPLF) form a helical membrane-spanning segment. Residues 324-436 (MRDFKRALGR…RYGRIHSVPP (113 aa)) are Cytoplasmic-facing.

This sequence belongs to the G-protein coupled receptor 1 family. Interacts with MTOR, RPTOR and NF1. Interacts with CDK5. As to expression, localized exclusively in the central nervous system, predominantly in the corpus striatum but also in various limbic and cortical regions.

The protein resides in the cell membrane. G-protein coupled receptor for 5-hydroxytryptamine (serotonin), a biogenic hormone that functions as a neurotransmitter, a hormone and a mitogen. Also has a high affinity for tricyclic psychotropic drugs. Ligand binding causes a conformation change that triggers signaling via guanine nucleotide-binding proteins (G proteins) and modulates the activity of downstream effectors. HTR6 is coupled to G(s) G alpha proteins and mediates activation of adenylate cyclase activity. Controls pyramidal neurons migration during corticogenesis, through the regulation of CDK5 activity. Is an activator of mTOR signaling. This Rattus norvegicus (Rat) protein is 5-hydroxytryptamine receptor 6 (Htr6).